We begin with the raw amino-acid sequence, 484 residues long: Monocarboxylate transporter 2 (484 aa).

Residues 1–16 lie on the Cytoplasmic side of the membrane; that stretch reads MPAPTAVPPPHPLPPD. Residues 17 to 37 traverse the membrane as a helical segment; sequence GGWGWVVVGASFISIGFSYAF. At 38–60 the chain is on the extracellular side; it reads PKSVTVFFKDIQEIFRAGHSKVA. Residues 61–81 form a helical membrane-spanning segment; that stretch reads WISSIMLAVMYAGGPISSVLV. Residues 82–87 lie on the Cytoplasmic side of the membrane; it reads NKYGSR. The helical transmembrane segment at 88 to 108 threads the bilayer; the sequence is PVVVIGGLLCCTGMILASFST. The Extracellular segment spans residues 109 to 116; sequence SMIQLYLT. A helical membrane pass occupies residues 117 to 137; that stretch reads IGFISGLGLAFNLQPALTILG. At 138–144 the chain is on the cytoplasmic side; sequence KYFYRRR. The chain crosses the membrane as a helical span at residues 145-165; it reads PLASGLAMTGSPVFLSSLAPF. Residues 166–174 are Extracellular-facing; sequence NQYLFNSYG. A helical membrane pass occupies residues 175–195; it reads LKGSFLILGGIFLHSCVAGSL. The Cytoplasmic segment spans residues 196-245; sequence MRPVGTSQQSPKSKSKVSSRHDSSTKKAPKLTLAQRINMFLDFSLFKHRG. The segment at 198–223 is disordered; sequence PVGTSQQSPKSKSKVSSRHDSSTKKA. Residues 246 to 266 traverse the membrane as a helical segment; it reads FLIYLSGNVIMFLGFFAPVIF. The Extracellular portion of the chain corresponds to 267 to 281; that stretch reads LSPYAKNRGVDDYKA. Residues 282–302 form a helical membrane-spanning segment; the sequence is AYLLSVMAFVDMFSRPCGGLI. Residues 303 to 311 lie on the Cytoplasmic side of the membrane; the sequence is ANTRLVRPR. A helical transmembrane segment spans residues 312 to 332; that stretch reads IQYFFSLAIVFTGVCHLLCPL. Topologically, residues 333–337 are extracellular; it reads AESYT. A helical membrane pass occupies residues 338-358; sequence ALVVYAIFFGYGFGSVSSILF. Topologically, residues 359 to 372 are cytoplasmic; that stretch reads ETLMDLVGPARFSS. Residues 373–393 traverse the membrane as a helical segment; that stretch reads AVGLVTIVECCPVLLGPPLAG. The Extracellular portion of the chain corresponds to 394-405; it reads KLVDETGEHKYL. A helical membrane pass occupies residues 406–426; sequence FVASGAIVVLAGIWLFIGNAI. Residues 427 to 484 lie on the Cytoplasmic side of the membrane; the sequence is NYRLLAKERKREKARKKKSPNRHSKELESLSKSNQDDVAVRVPQAHRSPSDKERESNI. The segment at 437–484 is disordered; it reads REKARKKKSPNRHSKELESLSKSNQDDVAVRVPQAHRSPSDKERESNI. Residues 438–448 are compositionally biased toward basic residues; sequence EKARKKKSPNR. Composition is skewed to basic and acidic residues over residues 449-465 and 474-484; these read HSKELESLSKSNQDDVA and SPSDKERESNI.

It belongs to the major facilitator superfamily. Monocarboxylate porter (TC 2.A.1.13) family. Homodimer. Interacts with GRID2IP. Interacts with EMB; interaction mediates SLC16A7 targeting to the plasma membrane. Interacts with isoform 2 of BSG.

It is found in the cell membrane. It localises to the basolateral cell membrane. The protein resides in the cytoplasm. The catalysed reaction is 3-methyl-2-oxobutanoate(out) + H(+)(out) = 3-methyl-2-oxobutanoate(in) + H(+)(in). It catalyses the reaction (S)-lactate(in) + H(+)(in) = (S)-lactate(out) + H(+)(out). It carries out the reaction acetoacetate(out) + H(+)(out) = acetoacetate(in) + H(+)(in). The enzyme catalyses (R)-3-hydroxybutanoate(out) + H(+)(out) = (R)-3-hydroxybutanoate(in) + H(+)(in). The catalysed reaction is 4-methyl-2-oxopentanoate(out) + H(+)(out) = 4-methyl-2-oxopentanoate(in) + H(+)(in). It catalyses the reaction pyruvate(out) + H(+)(out) = pyruvate(in) + H(+)(in). It carries out the reaction (S)-3-hydroxybutanoate(out) + H(+)(out) = (S)-3-hydroxybutanoate(in) + H(+)(in). Its activity is regulated as follows. Transport activity exhibits steep dependence on substrate concentration. Substrate concentration sensitivity of SLC16A7 arises from the strong inter-subunit cooperativity of the SLC16A7 dimer during transport. Inhibited by AR-C155858. Its function is as follows. Proton-coupled monocarboxylate symporter. Catalyzes the rapid transport across the plasma membrane of monocarboxylates such as L-lactate, pyruvate and ketone bodies, acetoacetate, beta-hydroxybutyrate and acetate. Dimerization is functionally required and both subunits work cooperatively in transporting substrate. This chain is Monocarboxylate transporter 2 (SLC16A7), found in Meriones unguiculatus (Mongolian jird).